The following is a 145-amino-acid chain: MELVEVLKRGVQQVTGHGGLRGLLRVFFRANDIRIGTLVGEDKYGNKYYEDNKQFFGRHRWVIYTTEMNGKNTFWDVDGSMVPPEWHRWLHCMTDDPPTTNPPTARKFIWTNHKFNVSATPEQYVPYSTTRKKIHEWVPPSTPYK.

Position 1 is an N-acetylmethionine (M1).

This sequence belongs to the complex I NDUFA12 subunit family. Complex I is composed of 45 different subunits.

The protein resides in the mitochondrion inner membrane. Functionally, accessory subunit of the mitochondrial membrane respiratory chain NADH dehydrogenase (Complex I), that is believed not to be involved in catalysis. Complex I functions in the transfer of electrons from NADH to the respiratory chain. The immediate electron acceptor for the enzyme is believed to be ubiquinone. The sequence is that of NADH dehydrogenase [ubiquinone] 1 alpha subcomplex subunit 12 (Ndufa12) from Mus musculus (Mouse).